The chain runs to 129 residues: uncharacterized protein (129 aa).

Positions 1-129 (MGRMASPLRS…PARQSARMAR (129 aa)) are disordered. Positions 18–46 (ESTRHKETSTVRVETSSHREETSSHRVET) are enriched in basic and acidic residues. Residues 47-59 (SSRQVRTSSRQVE) show a composition bias toward low complexity. Residues 70 to 97 (LTPSTKRLPQFLEVSSQHVETSSQCTET) show a composition bias toward polar residues.

This is an uncharacterized protein from Mus musculus (Mouse).